The primary structure comprises 125 residues: Small ribosomal subunit protein uS12 (125 aa).

Aspartate 89 is modified (3-methylthioaspartic acid). A disordered region spans residues 100–125; sequence GSLDTQGVKDRKQSRSKYGAKRPKAA. Over residues 113–125 the composition is skewed to basic residues; the sequence is SRSKYGAKRPKAA.

It belongs to the universal ribosomal protein uS12 family. In terms of assembly, part of the 30S ribosomal subunit. Contacts proteins S8 and S17. May interact with IF1 in the 30S initiation complex.

With S4 and S5 plays an important role in translational accuracy. In terms of biological role, interacts with and stabilizes bases of the 16S rRNA that are involved in tRNA selection in the A site and with the mRNA backbone. Located at the interface of the 30S and 50S subunits, it traverses the body of the 30S subunit contacting proteins on the other side and probably holding the rRNA structure together. The combined cluster of proteins S8, S12 and S17 appears to hold together the shoulder and platform of the 30S subunit. The sequence is that of Small ribosomal subunit protein uS12 from Dechloromonas aromatica (strain RCB).